The sequence spans 270 residues: Phosphatidylglycerol--prolipoprotein diacylglyceryl transferase (270 aa).

A run of 4 helical transmembrane segments spans residues phenylalanine 19 to alanine 39, phenylalanine 53 to valine 73, glutamine 92 to alanine 112, and isoleucine 117 to glycine 137. Arginine 138 contacts a 1,2-diacyl-sn-glycero-3-phospho-(1'-sn-glycerol). A run of 3 helical transmembrane segments spans residues histidine 178–leucine 198, glycine 206–leucine 226, and leucine 236–valine 256.

Belongs to the Lgt family.

It is found in the cell membrane. The catalysed reaction is L-cysteinyl-[prolipoprotein] + a 1,2-diacyl-sn-glycero-3-phospho-(1'-sn-glycerol) = an S-1,2-diacyl-sn-glyceryl-L-cysteinyl-[prolipoprotein] + sn-glycerol 1-phosphate + H(+). Its pathway is protein modification; lipoprotein biosynthesis (diacylglyceryl transfer). Catalyzes the transfer of the diacylglyceryl group from phosphatidylglycerol to the sulfhydryl group of the N-terminal cysteine of a prolipoprotein, the first step in the formation of mature lipoproteins. In Bacillus cytotoxicus (strain DSM 22905 / CIP 110041 / 391-98 / NVH 391-98), this protein is Phosphatidylglycerol--prolipoprotein diacylglyceryl transferase.